The following is a 136-amino-acid chain: Orexigenic neuropeptide QRFP (136 aa).

A signal peptide spans 1–18 (MVRPYPLIYFLFLPLGAC). A propeptide spanning residues 19–90 (FPLLDRREPT…HAGCRFRFGR (72 aa)) is cleaved from the precursor. At Gln-91 the chain carries Pyrrolidone carboxylic acid. Phe-133 carries the post-translational modification Phenylalanine amide.

Belongs to the RFamide neuropeptide family. Ligand for the G-protein coupled receptor QRFPR/GPR103. In terms of tissue distribution, expressed widely in the brain with highest expression levels in the cerebellum, medulla, pituitary, retina, vestibular nucleus, and white matter. Also expressed in the bladder, colon, coronary artery, parathyroid gland, prostate, testis, and thyroid.

The protein resides in the secreted. Stimulates feeding behavior, metabolic rate and locomotor activity and increases blood pressure. May have orexigenic activity. May promote aldosterone secretion by the adrenal gland. In Homo sapiens (Human), this protein is Orexigenic neuropeptide QRFP.